The following is a 308-amino-acid chain: F-actin-capping protein subunit alpha (308 aa).

It belongs to the F-actin-capping protein alpha subunit family. In terms of assembly, component of the F-actin capping complex, composed of a heterodimer of an alpha and a beta subunit.

In terms of biological role, F-actin-capping proteins bind in a Ca(2+)-independent manner to the fast growing ends of actin filaments (barbed end) thereby blocking the exchange of subunits at these ends. Unlike other capping proteins (such as gelsolin and severin), these proteins do not sever actin filaments. The chain is F-actin-capping protein subunit alpha from Arabidopsis thaliana (Mouse-ear cress).